The following is a 398-amino-acid chain: 2,3-bisphosphoglycerate-independent phosphoglycerate mutase (398 aa).

This sequence belongs to the BPG-independent phosphoglycerate mutase family. A-PGAM subfamily.

It carries out the reaction (2R)-2-phosphoglycerate = (2R)-3-phosphoglycerate. The protein operates within carbohydrate degradation; glycolysis; pyruvate from D-glyceraldehyde 3-phosphate: step 3/5. Its function is as follows. Catalyzes the interconversion of 2-phosphoglycerate and 3-phosphoglycerate. In Methanosarcina barkeri (strain Fusaro / DSM 804), this protein is 2,3-bisphosphoglycerate-independent phosphoglycerate mutase.